The following is a 374-amino-acid chain: Putative phosphoserine aminotransferase (374 aa).

R48 contacts L-glutamate. Pyridoxal 5'-phosphate is bound by residues 82–83 (AT), F106, T152, D174, and Q197. K198 carries the N6-(pyridoxal phosphate)lysine modification. 249-250 (NT) provides a ligand contact to pyridoxal 5'-phosphate.

It belongs to the class-V pyridoxal-phosphate-dependent aminotransferase family. SerC subfamily. Homodimer. The cofactor is pyridoxal 5'-phosphate.

The protein resides in the cytoplasm. It carries out the reaction O-phospho-L-serine + 2-oxoglutarate = 3-phosphooxypyruvate + L-glutamate. The enzyme catalyses 4-(phosphooxy)-L-threonine + 2-oxoglutarate = (R)-3-hydroxy-2-oxo-4-phosphooxybutanoate + L-glutamate. It participates in amino-acid biosynthesis; L-serine biosynthesis; L-serine from 3-phospho-D-glycerate: step 2/3. The protein operates within cofactor biosynthesis; pyridoxine 5'-phosphate biosynthesis; pyridoxine 5'-phosphate from D-erythrose 4-phosphate: step 3/5. Its function is as follows. Catalyzes the reversible conversion of 3-phosphohydroxypyruvate to phosphoserine and of 3-hydroxy-2-oxo-4-phosphonooxybutanoate to phosphohydroxythreonine. The chain is Putative phosphoserine aminotransferase from Mycobacterium avium (strain 104).